Consider the following 1045-residue polypeptide: Protein transport protein Sec16B (1045 aa).

The span at 1–13 (MEPWVPQWPPPSR) shows a compositional bias: pro residues. The tract at residues 1–78 (MEPWVPQWPP…PQHVPRLGAW (78 aa)) is disordered. The segment covering 22 to 33 (DSERGLQRDGYH) has biased composition (basic and acidic residues). Residues 50 to 60 (QDVQGSPQPQQ) are compositionally biased toward polar residues. 2 positions are modified to phosphoserine: S55 and S137. The segment covering 149 to 168 (RHLSEHRPENQSRTFRRDSE) has biased composition (basic and acidic residues). Disordered regions lie at residues 149 to 193 (RHLS…QERP), 707 to 733 (QQKA…TTES), 748 to 789 (APGC…YSVP), and 813 to 1045 (QTHS…TQPC). The residue at position 186 (S186) is a Phosphoserine. The tract at residues 267 to 711 (APKKFYIPHV…RHQELQQKAA (445 aa)) is central conserved domain (CCD); required for localization to endoplasmic reticulum exit sites. Low complexity predominate over residues 773-784 (GPAAGPAGAPVP). S852, S858, S866, and S867 each carry phosphoserine. Residues 916–926 (EDSSDSPDSEQ) show a composition bias toward acidic residues. Pro residues predominate over residues 942 to 953 (SPPPLLESPPLP). Positions 957–966 (AFGGGTGRGE) are enriched in gly residues. Residues 989–998 (ESASSELYSN) are compositionally biased toward polar residues.

It belongs to the SEC16 family. As to quaternary structure, SEC16A and SEC16B are each present in multiple copies in a heteromeric complex. Interacts with TFG. Interacts with SEC13. Liver.

It is found in the endoplasmic reticulum membrane. It localises to the golgi apparatus membrane. Plays a role in the organization of the endoplasmic reticulum exit sites (ERES), also known as transitional endoplasmic reticulum (tER). Required for secretory cargo traffic from the endoplasmic reticulum to the Golgi apparatus. Involved in peroxisome biogenesis. Regulates the transport of peroxisomal biogenesis factors PEX3 and PEX16 from the ER to peroxisomes. In Oryctolagus cuniculus (Rabbit), this protein is Protein transport protein Sec16B (SEC16B).